We begin with the raw amino-acid sequence, 47 residues long: Defensin-2 (47 aa).

Intrachain disulfides connect C3/C47, C14/C35, C20/C41, and C24/C43.

This sequence belongs to the DEFL family. As to expression, epidermis and vascular bundles of pods, stems, roots, leaves and wet or dry seeds.

Possesses antifungal activity sensitive to inorganic cations. This is Defensin-2 from Pisum sativum (Garden pea).